The primary structure comprises 86 residues: UPF0297 protein SH1302 (86 aa).

Belongs to the UPF0297 family.

This chain is UPF0297 protein SH1302, found in Staphylococcus haemolyticus (strain JCSC1435).